Here is a 31-residue protein sequence, read N- to C-terminus: Cyclotide vpub-B (31 aa).

The segment at residues 1–31 (GIIPCGESCVFIPCITSVVGCSCKSKVCYKN) is a cross-link (cyclopeptide (Gly-Asn)). Cystine bridges form between Cys-5-Cys-21, Cys-9-Cys-23, and Cys-14-Cys-28.

It belongs to the cyclotide family. Bracelet subfamily. This is a cyclic peptide.

Probably participates in a plant defense mechanism. This is Cyclotide vpub-B from Viola pubescens (Downy yellow violet).